The chain runs to 480 residues: Glutamyl-tRNA(Gln) amidotransferase subunit A (480 aa).

Catalysis depends on charge relay system residues lysine 74 and serine 149. The Acyl-ester intermediate role is filled by serine 173.

This sequence belongs to the amidase family. GatA subfamily. As to quaternary structure, heterotrimer of A, B and C subunits.

The catalysed reaction is L-glutamyl-tRNA(Gln) + L-glutamine + ATP + H2O = L-glutaminyl-tRNA(Gln) + L-glutamate + ADP + phosphate + H(+). Its function is as follows. Allows the formation of correctly charged Gln-tRNA(Gln) through the transamidation of misacylated Glu-tRNA(Gln) in organisms which lack glutaminyl-tRNA synthetase. The reaction takes place in the presence of glutamine and ATP through an activated gamma-phospho-Glu-tRNA(Gln). The chain is Glutamyl-tRNA(Gln) amidotransferase subunit A from Ruthia magnifica subsp. Calyptogena magnifica.